A 330-amino-acid polypeptide reads, in one-letter code: Biotin synthase (330 aa).

In terms of domain architecture, Radical SAM core spans 53-276 (NNIRLNVLLS…VFPFKELRLS (224 aa)). Positions 68, 72, and 75 each coordinate [4Fe-4S] cluster. The [2Fe-2S] cluster site is built by C112, C144, C204, and R274.

Belongs to the radical SAM superfamily. Biotin synthase family. Homodimer. Requires [4Fe-4S] cluster as cofactor. It depends on [2Fe-2S] cluster as a cofactor.

It catalyses the reaction (4R,5S)-dethiobiotin + (sulfur carrier)-SH + 2 reduced [2Fe-2S]-[ferredoxin] + 2 S-adenosyl-L-methionine = (sulfur carrier)-H + biotin + 2 5'-deoxyadenosine + 2 L-methionine + 2 oxidized [2Fe-2S]-[ferredoxin]. The protein operates within cofactor biosynthesis; biotin biosynthesis; biotin from 7,8-diaminononanoate: step 2/2. Functionally, catalyzes the conversion of dethiobiotin (DTB) to biotin by the insertion of a sulfur atom into dethiobiotin via a radical-based mechanism. This Streptococcus agalactiae serotype V (strain ATCC BAA-611 / 2603 V/R) protein is Biotin synthase.